We begin with the raw amino-acid sequence, 689 residues long: SH3 domain-binding protein 1 (689 aa).

The segment covering 1–11 has biased composition (basic residues); the sequence is MMKRQLHRMRQ. Positions 1–24 are disordered; that stretch reads MMKRQLHRMRQLAHTGSSGRTPET. The tract at residues 1-275 is interaction with CGNL1; sequence MMKRQLHRMR…TAAPFSRVYG (275 aa). Residues 17-262 form the BAR domain; the sequence is SSGRTPETAE…RDNHSQADSS (246 aa). Phosphoserine is present on residues Ser241 and Ser262. In terms of domain architecture, Rho-GAP spans 276–469; it reads VSLRTHLQDL…VLIQNADTLF (194 aa). An interaction with CD2AP region spans residues 470 to 689; the sequence is PGDINFSVSG…RPRGLISETD (220 aa). The segment at 507–689 is disordered; that stretch reads TAATPTPTPA…RPRGLISETD (183 aa). Ser539 and Ser545 each carry phosphoserine. Residues 565–575 are compositionally biased toward pro residues; sequence PARPTMPPPQP. A compositionally biased stretch (low complexity) spans 576-594; the sequence is SSSRSSPPALSLPAGSVSP. Ser586 bears the Phosphoserine mark. The residue at position 596 (Thr596) is a Phosphothreonine. Residues 611-620 carry the SH3-binding motif; the sequence is APTVPPPLPP. The segment covering 613-625 has biased composition (pro residues); sequence TVPPPLPPAPPQP. Residue Ser641 is modified to Phosphoserine. Residues 670–680 show a composition bias toward pro residues; that stretch reads PPTPVLPPQPR.

Interacts with RAC1. Interacts with the exocyst via EXOC4 and EXOC8; required for the localization of both SH3BP1 and the exocyst to the leading edge of migrating cells. Interacts with CD2AP and CGNL1; probably part of a complex at cell junctions. Interacts with CAPZA1; recruits CAPZA1 to forming cell junctions. May interact with AFDN. Interacts with PLXND1; they dissociate upon SEMA3E binding to PLXND1 allowing SH3BP1 to transduce downstream signal through RAC1 inactivation. Interacts with ABL1, GRB2 and SRC (via SH3 domain).

The protein resides in the cell projection. It is found in the cell junction. The protein localises to the tight junction. Its subcellular location is the adherens junction. It localises to the phagocytic cup. The protein resides in the nucleus. It is found in the cytoplasm. The protein localises to the cytosol. Its function is as follows. GTPase activating protein/GAP which specifically converts GTP-bound Rho-type GTPases including RAC1 and CDC42 in their inactive GDP-bound form. By specifically inactivating RAC1 at the leading edge of migrating cells, it regulates the spatiotemporal organization of cell protrusions which is important for proper cell migration. Also negatively regulates CDC42 in the process of actin remodeling and the formation of epithelial cell junctions. Through its GAP activity toward RAC1 and/or CDC42 plays a specific role in phagocytosis of large particles. Specifically recruited by a PI3 kinase/PI3K-dependent mechanism to sites of large particles engagement, inactivates RAC1 and/or CDC42 allowing the reorganization of the underlying actin cytoskeleton required for engulfment. It also plays a role in angiogenesis and the process of repulsive guidance as part of a semaphorin-plexin signaling pathway. Following the binding of PLXND1 to extracellular SEMA3E it dissociates from PLXND1 and inactivates RAC1, inducing the intracellular reorganization of the actin cytoskeleton and the collapse of cells. The chain is SH3 domain-binding protein 1 from Rattus norvegicus (Rat).